Consider the following 108-residue polypeptide: Inner membrane protein H108R (108 aa).

The helical transmembrane segment at 10 to 32 threads the bilayer; it reads LIVIITILITTRELSTTMLIVSL. A compositionally biased stretch (polar residues) spans 49-64; sequence ENNTFSMPQKNSFNES. The segment at 49 to 69 is disordered; sequence ENNTFSMPQKNSFNESYNKDK. Asn-50 and Asn-62 each carry an N-linked (GlcNAc...) asparagine; by host glycan.

The protein belongs to the asfivirus H108R family.

It localises to the virion membrane. The sequence is that of Inner membrane protein H108R from African swine fever virus (strain Badajoz 1971 Vero-adapted) (Ba71V).